We begin with the raw amino-acid sequence, 426 residues long: Gamma-glutamyl phosphate reductase (426 aa).

This sequence belongs to the gamma-glutamyl phosphate reductase family.

The protein localises to the cytoplasm. It catalyses the reaction L-glutamate 5-semialdehyde + phosphate + NADP(+) = L-glutamyl 5-phosphate + NADPH + H(+). The protein operates within amino-acid biosynthesis; L-proline biosynthesis; L-glutamate 5-semialdehyde from L-glutamate: step 2/2. In terms of biological role, catalyzes the NADPH-dependent reduction of L-glutamate 5-phosphate into L-glutamate 5-semialdehyde and phosphate. The product spontaneously undergoes cyclization to form 1-pyrroline-5-carboxylate. This Nitrobacter winogradskyi (strain ATCC 25391 / DSM 10237 / CIP 104748 / NCIMB 11846 / Nb-255) protein is Gamma-glutamyl phosphate reductase.